The chain runs to 204 residues: Large ribosomal subunit protein eL15 (204 aa).

Residues 185-204 (GGSRRAAWKRKNREHMHRKR) form a disordered region. Basic residues predominate over residues 190 to 204 (AAWKRKNREHMHRKR).

Belongs to the eukaryotic ribosomal protein eL15 family.

The chain is Large ribosomal subunit protein eL15 (RpL15) from Drosophila melanogaster (Fruit fly).